A 339-amino-acid chain; its full sequence is Agamous-like MADS-box protein AGL86 (339 aa).

The MADS-box domain maps to 1–60 (MRSKIKLSLIANKTSRRTTFRKRKGGITNKLHELTTLCGVKACAVISSPYENPVVWPSTE). The stretch at 86-112 (TYLQDKITKETKKLESLRRENRESQLR) forms a coiled coil.

Interacts with AGL61/DIANA and AGL62.

The protein localises to the nucleus. Probable transcription factor. In Arabidopsis thaliana (Mouse-ear cress), this protein is Agamous-like MADS-box protein AGL86 (AGL86).